The primary structure comprises 193 residues: Potassium-transporting ATPase KdpC subunit (193 aa).

The helical transmembrane segment at 7-27 (PLVVIFVVLTAVTGLAYPAVM) threads the bilayer.

The protein belongs to the KdpC family. As to quaternary structure, the system is composed of three essential subunits: KdpA, KdpB and KdpC.

It is found in the cell inner membrane. Part of the high-affinity ATP-driven potassium transport (or Kdp) system, which catalyzes the hydrolysis of ATP coupled with the electrogenic transport of potassium into the cytoplasm. This subunit acts as a catalytic chaperone that increases the ATP-binding affinity of the ATP-hydrolyzing subunit KdpB by the formation of a transient KdpB/KdpC/ATP ternary complex. This is Potassium-transporting ATPase KdpC subunit from Burkholderia ambifaria (strain ATCC BAA-244 / DSM 16087 / CCUG 44356 / LMG 19182 / AMMD) (Burkholderia cepacia (strain AMMD)).